We begin with the raw amino-acid sequence, 649 residues long: Exoribonuclease 2 (649 aa).

In terms of domain architecture, RNB spans 190-517 (RKDLTDLDFI…NHRLLKSIIK (328 aa)). The 83-residue stretch at 562-644 (NQKFNAEITD…KTRSIIAKPV (83 aa)) folds into the S1 motif domain.

This sequence belongs to the RNR ribonuclease family. RNase II subfamily.

The protein localises to the cytoplasm. The enzyme catalyses Exonucleolytic cleavage in the 3'- to 5'-direction to yield nucleoside 5'-phosphates.. Its function is as follows. Involved in mRNA degradation. Hydrolyzes single-stranded polyribonucleotides processively in the 3' to 5' direction. In Buchnera aphidicola subsp. Acyrthosiphon pisum (strain 5A), this protein is Exoribonuclease 2.